The primary structure comprises 453 residues: Phenylalanine-4-hydroxylase (453 aa).

N-acetylalanine is present on alanine 2. Residue serine 16 is modified to Phosphoserine. In terms of domain architecture, ACT spans 36 to 114; the sequence is SLIFSLKEEV…TVHELSRDKE (79 aa). 3 residues coordinate Fe cation: histidine 285, histidine 290, and glutamate 330.

This sequence belongs to the biopterin-dependent aromatic amino acid hydroxylase family. As to quaternary structure, homodimer and homotetramer. The cofactor is Fe(2+). In terms of processing, phosphorylation at Ser-16 increases basal activity and facilitates activation by the substrate phenylalanine.

The catalysed reaction is (6R)-L-erythro-5,6,7,8-tetrahydrobiopterin + L-phenylalanine + O2 = (4aS,6R)-4a-hydroxy-L-erythro-5,6,7,8-tetrahydrobiopterin + L-tyrosine. The protein operates within amino-acid degradation; L-phenylalanine degradation; acetoacetate and fumarate from L-phenylalanine: step 1/6. Its activity is regulated as follows. N-terminal region of PAH is thought to contain allosteric binding sites for phenylalanine and to constitute an 'inhibitory' domain that regulates the activity of a catalytic domain in the C-terminal portion of the molecule. Functionally, catalyzes the hydroxylation of L-phenylalanine to L-tyrosine. This Mus musculus (Mouse) protein is Phenylalanine-4-hydroxylase (Pah).